Consider the following 234-residue polypeptide: Peroxiredoxin (234 aa).

Residues 6 to 161 (PLIGEKLPEM…ILRLLKALQV (156 aa)) form the Thioredoxin domain. The active-site Cysteine sulfenic acid (-SOH) intermediate is the C48. R124 is a substrate binding site. A disulfide bridge links C203 with C209.

This sequence belongs to the peroxiredoxin family. Prx6 subfamily. As to quaternary structure, homodecamer. Pentamer of dimers that assemble into a ring structure.

Its subcellular location is the cytoplasm. The enzyme catalyses a hydroperoxide + [thioredoxin]-dithiol = an alcohol + [thioredoxin]-disulfide + H2O. Functionally, thiol-specific peroxidase that catalyzes the reduction of hydrogen peroxide and organic hydroperoxides to water and alcohols, respectively. Plays a role in cell protection against oxidative stress by detoxifying peroxides. This is Peroxiredoxin from Ignicoccus hospitalis (strain KIN4/I / DSM 18386 / JCM 14125).